The following is a 247-amino-acid chain: Segregation and condensation protein A (247 aa).

Belongs to the ScpA family. As to quaternary structure, component of a cohesin-like complex composed of ScpA, ScpB and the Smc homodimer, in which ScpA and ScpB bind to the head domain of Smc. The presence of the three proteins is required for the association of the complex with DNA.

The protein resides in the cytoplasm. Functionally, participates in chromosomal partition during cell division. May act via the formation of a condensin-like complex containing Smc and ScpB that pull DNA away from mid-cell into both cell halves. The polypeptide is Segregation and condensation protein A (Mycoplasma mobile (strain ATCC 43663 / 163K / NCTC 11711) (Mesomycoplasma mobile)).